The chain runs to 545 residues: Reticulon-2 (545 aa).

2 disordered regions span residues Met1 to Glu183 and Ser199 to Pro250. The segment covering Ala14–Thr25 has biased composition (low complexity). Over residues Ser32–Phe43 the composition is skewed to basic and acidic residues. At Ser44 the chain carries Phosphoserine. A compositionally biased stretch (basic and acidic residues) spans Arg135–His146. A compositionally biased stretch (low complexity) spans Gly157–Thr166. Over residues Ser199–Gly230 the composition is skewed to polar residues. Phosphoserine is present on residues Ser227 and Ser229. The Reticulon domain occupies Val345–Glu545. Helical transmembrane passes span Leu368 to Leu388 and Leu463 to Leu483.

Interacts with isoform 1 but not isoform 3 of SPAST. Interacts with BACE1. Interacts (via first transmembrane domain) with ARL6IP5/GTRAP3-18. Interacts (via N-terminus) with SLC1A1/EAAC1; the interaction promotes cell surface expression of SLC1A1. In terms of assembly, interacts with TMEM33. In terms of tissue distribution, highly expressed in skeletal muscle.

The protein localises to the endoplasmic reticulum membrane. It is found in the sarcoplasmic reticulum membrane. The protein resides in the cell membrane. It localises to the sarcolemma. Its subcellular location is the T-tubule. The protein localises to the cytoplasm. It is found in the myofibril. The protein resides in the sarcomere. It localises to the z line. Its subcellular location is the cytoskeleton. Its function is as follows. Inhibits amyloid precursor protein processing, probably by blocking BACE1 activity. Enhances trafficking of the glutamate transporter SLC1A1/EAAC1 from the endoplasmic reticulum to the cell surface. Plays a role in the translocation of SLC2A4/GLUT4 from intracellular membranes to the cell membrane which facilitates the uptake of glucose into the cell. This Homo sapiens (Human) protein is Reticulon-2 (RTN2).